A 421-amino-acid polypeptide reads, in one-letter code: Enolase (421 aa).

Q162 is a (2R)-2-phosphoglycerate binding site. E204 (proton donor) is an active-site residue. The Mg(2+) site is built by D241, E284, and D311. Residues K336, R365, S366, and K387 each contribute to the (2R)-2-phosphoglycerate site. K336 (proton acceptor) is an active-site residue.

It belongs to the enolase family. Mg(2+) is required as a cofactor.

The protein resides in the cytoplasm. It is found in the secreted. The protein localises to the cell surface. The enzyme catalyses (2R)-2-phosphoglycerate = phosphoenolpyruvate + H2O. The protein operates within carbohydrate degradation; glycolysis; pyruvate from D-glyceraldehyde 3-phosphate: step 4/5. Catalyzes the reversible conversion of 2-phosphoglycerate (2-PG) into phosphoenolpyruvate (PEP). It is essential for the degradation of carbohydrates via glycolysis. This chain is Enolase, found in Nitratiruptor sp. (strain SB155-2).